Here is a 597-residue protein sequence, read N- to C-terminus: Pentatricopeptide repeat-containing protein At2g21090 (597 aa).

PPR repeat units follow at residues 45–79 (PFDL…GFKR), 81–111 (NTLL…MHLR), 112–142 (NLYS…MPER), 143–177 (DVVS…GIKF), 178–212 (NEFS…GFLS), 213–243 (NVVL…MTVK), 244–274 (DIHI…MPEK), 275–309 (NPVS…GVKP), 310–344 (EQFT…NVRP), 345–375 (NAIV…CDDK), 377–411 (DCVF…RVQP), 412–447 (NRTT…GIVP), and 448–478 (DQEH…MPFE). Residues 483-558 (IWNAILGVCR…EKAVSWIEIE (76 aa)) form a type E motif region. Positions 559 to 591 (KKVEAFTVSDGSHAHARKEEIYFILHNLAAVIE) are type E(+) motif.

The protein belongs to the PPR family. PCMP-E subfamily.

The polypeptide is Pentatricopeptide repeat-containing protein At2g21090 (PCMP-E48) (Arabidopsis thaliana (Mouse-ear cress)).